Here is a 172-residue protein sequence, read N- to C-terminus: uncharacterized protein (172 aa).

The interval 22-64 is disordered; the sequence is RSVSSSPAAKQPAPGTVAQSFPPGELALRDETGGRGRGTRGIR.

This is an uncharacterized protein from Human cytomegalovirus (strain AD169) (HHV-5).